The sequence spans 274 residues: Large ribosomal subunit protein uL2 (274 aa).

The tract at residues 195–274 (VGNSDHGLES…SKYIIERRKK (80 aa)) is disordered. Composition is skewed to basic residues over residues 209–220 (GRSRWQGRRPRN) and 244–264 (PRSR…KKQS).

It belongs to the universal ribosomal protein uL2 family. Part of the 50S ribosomal subunit. Forms a bridge to the 30S subunit in the 70S ribosome.

In terms of biological role, one of the primary rRNA binding proteins. Required for association of the 30S and 50S subunits to form the 70S ribosome, for tRNA binding and peptide bond formation. It has been suggested to have peptidyltransferase activity; this is somewhat controversial. Makes several contacts with the 16S rRNA in the 70S ribosome. The protein is Large ribosomal subunit protein uL2 of Bacteroides fragilis (strain ATCC 25285 / DSM 2151 / CCUG 4856 / JCM 11019 / LMG 10263 / NCTC 9343 / Onslow / VPI 2553 / EN-2).